Reading from the N-terminus, the 223-residue chain is Ras-related protein Rab-37 (223 aa).

Positions 1–23 are disordered; the sequence is MTGTPGAVATRDGEAPERSPPCS. The residue at position 2 (threonine 2) is an N-acetylthreonine. GTP is bound by residues threonine 38, glycine 39, valine 40, glycine 41, lysine 42, threonine 43, cysteine 44, and threonine 62. Threonine 43 lines the Mg(2+) pocket. 2 short sequence motifs (switch) span residues 52 to 67 and 85 to 102; these read GAFL…GIDF and DTAG…YYRD. Positions 62 and 85 each coordinate Mg(2+). GTP-binding residues include glycine 88, asparagine 143, lysine 144, aspartate 146, methionine 147, serine 173, alanine 174, and lysine 175. S-geranylgeranyl cysteine attachment occurs at residues cysteine 219 and cysteine 220. Position 220 is a cysteine methyl ester (cysteine 220). Residues 221–223 constitute a propeptide, removed in mature form; sequence SFM.

This sequence belongs to the small GTPase superfamily. Rab family. As to quaternary structure, interacts with RIMS1. Interacts (in GDP-bound form) with RPGR, RPGR functions as guanine exchange factor (GEF). The cofactor is Mg(2+).

The protein localises to the cytoplasmic vesicle. The protein resides in the cell projection. It localises to the cilium. It catalyses the reaction GTP + H2O = GDP + phosphate + H(+). With respect to regulation, regulated by guanine nucleotide exchange factors (GEFs) including RPGR which promote the exchange of bound GDP for free GTP. Regulated by GTPase activating proteins (GAPs) which increase the GTP hydrolysis activity. Inhibited by GDP dissociation inhibitors (GDIs). Functionally, the small GTPases Rab are key regulators of intracellular membrane trafficking, from the formation of transport vesicles to their fusion with membranes. Rabs cycle between an inactive GDP-bound form and an active GTP-bound form that is able to recruit to membranes different sets of downstream effectors directly responsible for vesicle formation, movement, tethering and fusion. Acts as an organizer for autophagosome biogenesis in a GTP-dependent manner. Involved in retinal homeostasis by autophagy regulation. The chain is Ras-related protein Rab-37 from Homo sapiens (Human).